Reading from the N-terminus, the 124-residue chain is Small ribosomal subunit protein uS12 (124 aa).

Asp-89 is subject to 3-methylthioaspartic acid.

It belongs to the universal ribosomal protein uS12 family. As to quaternary structure, part of the 30S ribosomal subunit. Contacts proteins S8 and S17. May interact with IF1 in the 30S initiation complex.

In terms of biological role, with S4 and S5 plays an important role in translational accuracy. Interacts with and stabilizes bases of the 16S rRNA that are involved in tRNA selection in the A site and with the mRNA backbone. Located at the interface of the 30S and 50S subunits, it traverses the body of the 30S subunit contacting proteins on the other side and probably holding the rRNA structure together. The combined cluster of proteins S8, S12 and S17 appears to hold together the shoulder and platform of the 30S subunit. In Campylobacter hominis (strain ATCC BAA-381 / DSM 21671 / CCUG 45161 / LMG 19568 / NCTC 13146 / CH001A), this protein is Small ribosomal subunit protein uS12.